We begin with the raw amino-acid sequence, 104 residues long: Flagellar hook-basal body complex protein FliE (104 aa).

It belongs to the FliE family.

It is found in the bacterial flagellum basal body. This is Flagellar hook-basal body complex protein FliE from Escherichia fergusonii (strain ATCC 35469 / DSM 13698 / CCUG 18766 / IAM 14443 / JCM 21226 / LMG 7866 / NBRC 102419 / NCTC 12128 / CDC 0568-73).